The sequence spans 446 residues: tRNA-2-methylthio-N(6)-dimethylallyladenosine synthase (446 aa).

Residues 3–124 form the MTTase N-terminal domain; sequence KKLYIKTYGC…LPELISKVVR (122 aa). Cys-12, Cys-48, Cys-87, Cys-162, Cys-166, and Cys-169 together coordinate [4Fe-4S] cluster. The Radical SAM core domain maps to 148–380; sequence YPQGASSFIS…QKELAAQQLA (233 aa). The region spanning 383–446 is the TRAM domain; the sequence is ESCIGSTMKV…LNSLSGEIYR (64 aa).

Belongs to the methylthiotransferase family. MiaB subfamily. As to quaternary structure, monomer. [4Fe-4S] cluster serves as cofactor.

The protein resides in the cytoplasm. It carries out the reaction N(6)-dimethylallyladenosine(37) in tRNA + (sulfur carrier)-SH + AH2 + 2 S-adenosyl-L-methionine = 2-methylsulfanyl-N(6)-dimethylallyladenosine(37) in tRNA + (sulfur carrier)-H + 5'-deoxyadenosine + L-methionine + A + S-adenosyl-L-homocysteine + 2 H(+). Its function is as follows. Catalyzes the methylthiolation of N6-(dimethylallyl)adenosine (i(6)A), leading to the formation of 2-methylthio-N6-(dimethylallyl)adenosine (ms(2)i(6)A) at position 37 in tRNAs that read codons beginning with uridine. This is tRNA-2-methylthio-N(6)-dimethylallyladenosine synthase from Rickettsia bellii (strain RML369-C).